The following is a 334-amino-acid chain: Nucleoid-associated protein YPN_2714 (334 aa).

The protein belongs to the YejK family.

The protein resides in the cytoplasm. Its subcellular location is the nucleoid. This chain is Nucleoid-associated protein YPN_2714, found in Yersinia pestis bv. Antiqua (strain Nepal516).